Consider the following 583-residue polypeptide: Peptidyl-prolyl cis-trans isomerase FKBP10 (583 aa).

An N-terminal signal peptide occupies residues 1–27 (MLRAGPPSHTLLRLPLLQLLLLLLVQA). PPIase FKBP-type domains lie at 63 to 151 (GDFV…LDVW), 175 to 263 (SDFV…IDVH), 287 to 375 (GDFM…IDFH), and 400 to 487 (GDFV…VSRE). Residues Asn71, Asn183, and Asn295 are each glycosylated (N-linked (GlcNAc...) asparagine). 2 EF-hand domains span residues 498 to 533 (WHED…QVSE) and 543 to 578 (DPEK…DQDR). Residues Asp511, Asn513, Asp515, Glu517, Glu522, Asp556, Asn558, Asp560, Lys562, and Glu567 each coordinate Ca(2+). Residues 534-583 (GKGRLLPGQDPEKTIGDMFQNQDRNQDGKITAEELKLKSDEDQDRVHEEL) are disordered. Residues 557 to 583 (RNQDGKITAEELKLKSDEDQDRVHEEL) show a composition bias toward basic and acidic residues. Positions 580-583 (HEEL) match the Prevents secretion from ER motif.

Glycosylated and phosphorylated.

It is found in the endoplasmic reticulum lumen. The catalysed reaction is [protein]-peptidylproline (omega=180) = [protein]-peptidylproline (omega=0). Its activity is regulated as follows. Inhibited by both FK506 and rapamycin, but not by cyclosporin A. In terms of biological role, PPIases accelerate the folding of proteins during protein synthesis. In Bos taurus (Bovine), this protein is Peptidyl-prolyl cis-trans isomerase FKBP10 (FKBP10).